The primary structure comprises 513 residues: ATP synthase subunit alpha (513 aa).

An ATP-binding site is contributed by 169–176 (GDRQIGKT).

This sequence belongs to the ATPase alpha/beta chains family. F-type ATPases have 2 components, CF(1) - the catalytic core - and CF(0) - the membrane proton channel. CF(1) has five subunits: alpha(3), beta(3), gamma(1), delta(1), epsilon(1). CF(0) has three main subunits: a(1), b(2) and c(9-12). The alpha and beta chains form an alternating ring which encloses part of the gamma chain. CF(1) is attached to CF(0) by a central stalk formed by the gamma and epsilon chains, while a peripheral stalk is formed by the delta and b chains.

The protein localises to the cell inner membrane. The enzyme catalyses ATP + H2O + 4 H(+)(in) = ADP + phosphate + 5 H(+)(out). Functionally, produces ATP from ADP in the presence of a proton gradient across the membrane. The alpha chain is a regulatory subunit. The polypeptide is ATP synthase subunit alpha (Francisella tularensis subsp. tularensis (strain WY96-3418)).